Reading from the N-terminus, the 382-residue chain is Succinate--CoA ligase [ADP-forming] subunit beta 1 (382 aa).

The region spanning 9 to 235 is the ATP-grasp domain; that stretch reads KQIFAKHGIR…ATEEDPLERE (227 aa). Residues lysine 45, 52 to 54, glutamate 91, leucine 94, and glutamate 99 contribute to the ATP site; that span reads GRG. The Mg(2+) site is built by asparagine 191 and aspartate 204. Residue asparagine 255 participates in substrate binding.

The protein belongs to the succinate/malate CoA ligase beta subunit family. As to quaternary structure, heterotetramer of two alpha and two beta subunits. Mg(2+) serves as cofactor.

The enzyme catalyses succinate + ATP + CoA = succinyl-CoA + ADP + phosphate. It carries out the reaction GTP + succinate + CoA = succinyl-CoA + GDP + phosphate. It functions in the pathway carbohydrate metabolism; tricarboxylic acid cycle; succinate from succinyl-CoA (ligase route): step 1/1. Succinyl-CoA synthetase functions in the citric acid cycle (TCA), coupling the hydrolysis of succinyl-CoA to the synthesis of either ATP or GTP and thus represents the only step of substrate-level phosphorylation in the TCA. The beta subunit provides nucleotide specificity of the enzyme and binds the substrate succinate, while the binding sites for coenzyme A and phosphate are found in the alpha subunit. The chain is Succinate--CoA ligase [ADP-forming] subunit beta 1 from Archaeoglobus fulgidus (strain ATCC 49558 / DSM 4304 / JCM 9628 / NBRC 100126 / VC-16).